The primary structure comprises 995 residues: MDKHLLVKRTLGCVCAATLMGAALATHHDSLNTVKAEEKTVQVQKGLPSIDSLHYLSENSKKEFKEELSKAGQESQKVKEILAKAQQADKQAQELAKMKIPEKIPMKPLHGSLYGGYFRTWHDKTSDPTEKDKVNSMGELPKEVDLAFIFHDWTKDYSLFWKELATKHVPKLNKQGTRVIRTIPWRFLAGGDNSGIAEDTSKYPNTPEGNKALAKAIVDEYVYKYNLDGLDVDVEHDSIPKVDKKEDTAGVERSIQVFEEIGKLIGPKGVDKSRLFIMDSTYMADKNPLIERGAPYINLLLVQVYGSQGEKGGWEPVSNRPEKTMEERWQGYSKYIRPEQYMIGFSFYEENAQEGNLWYDINSRKDEDKANGINTDITGTRAERYARWQPKTGGVKGGIFSYAIDRDGVAHQPKKYAKQKEFKDATDNIFHSDYSVSKALKTVMLKDKSYDLIDEKDFPDKALREAVMAQVGTRKGDLERFNGTLRLDNPAIQSLEGLNKFKKLAQLDLIGLSRITKLDRSVLPANMKPGKDTLETVLETYKKDNKEEPATIPPVSLKVSGLTGLKELDLSGFDRETLAGLDAATLTSLEKVDISGNKLDLAPGTENRQIFDTMLSTISNHVGSNEQTVKFDKQKPTGHYPDTYGKTSLRLPVANEKVDLQSQLLFGTVTNQGTLINSEADYKAYQNHKIAGRSFVDSNYHYNNFKVSYENYTVKVTDSTLGTTTDKTLATDKEETYKVDFFSPADKTKAVHTAKVIVGDEKTMMVNLAEGATVIGGSADPVNARKVFDGQLGSETDNISLGWDSKQSIIFKLKEDGLIKHWRFFNDSARNPETTNKPIQEASLQIFNIKDYNLDNLLENPNKFDDEKYWITVDTYSAQGERATAFSNTLNNITSKYWRVVFDTKGDRYSSPVVPELQILGYPLPNADTIMKTVTTAKELSQQKDKFSQKMLDELKIKEMALETSLNSKIFDVTAINANAGVLKDCIEKRQLLKK.

Residues 1–36 (MDKHLLVKRTLGCVCAATLMGAALATHHDSLNTVKA) form the signal peptide. Residues 112–432 (SLYGGYFRTW…KDATDNIFHS (321 aa)) form the GH18 domain. 3 residues coordinate a glycoprotein: H151, W153, and R186. E235 functions as the Proton donor in the catalytic mechanism. D237, Q303, Y305, E349, E350, N356, and Y402 together coordinate a glycoprotein. LRR repeat units follow at residues 437–460 (SKALKTVMLKDKSYDLIDEKDFPD), 478–503 (LERFNGTLRLDNPAIQSLEGLNKFKK), 562–585 (LTGLKELDLSGFDRETLAGLDAAT), and 586–609 (LTSLEKVDISGNKLDLAPGTENRQ). The segment at 765-923 (MVNLAEGATV…VPELQILGYP (159 aa)) is carbohydrate-binding module (CBM). The Ca(2+) site is built by K786, D789, Q791, P915, and E916. The three-helix bundle (3H) stretch occupies residues 924–995 (LPNADTIMKT…CIEKRQLLKK (72 aa)).

This sequence belongs to the glycosyl hydrolase 18 family. Cleaved by SpeB protease; leading to loss of endoglucosidase activity. EndoS is produced and secreted prior to SpeB, suggesting that it is degraded after acting as a host immune evasion factor.

It localises to the secreted. The protein localises to the host extracellular space. It carries out the reaction an N(4)-(oligosaccharide-(1-&gt;3)-[oligosaccharide-(1-&gt;6)]-beta-D-Man-(1-&gt;4)-beta-D-GlcNAc-(1-&gt;4)-alpha-D-GlcNAc)-L-asparaginyl-[protein] + H2O = an oligosaccharide-(1-&gt;3)-[oligosaccharide-(1-&gt;6)]-beta-D-Man-(1-&gt;4)-D-GlcNAc + N(4)-(N-acetyl-beta-D-glucosaminyl)-L-asparaginyl-[protein]. In terms of biological role, endoglucosidase that acts as a host immune evasion factor by mediating hydrolysis of the N-linked glycan from the Fc region of host immunoglobulin-gamma (IgG) during infection. Specifically catalyzes the hydrolysis of the beta-1,4 linkage between the first two N-acetylglucosamine residues of the complex-type N-linked glycan located on 'Asn-297' of the Fc region of IgG antibodies (IGHG1, IGHG2, IGHG3 or IGHG4), thereby preventing interaction between IgGs and Fc receptors and ability to activate the complement pathway. Shows a specificity for biantennary complex type N-glycans; does neither cleave larger complex type glycans nor oligomannose and nor hybrid-type glycans. Specifically acts on IgGs; does not act on immunoglobulin alpha, beta, delta or mu. In Streptococcus pyogenes serotype M1, this protein is Endo-beta-N-acetylglucosaminidase EndoS.